The primary structure comprises 462 residues: ATP synthase subunit beta (462 aa).

150-157 (GGAGVGKT) provides a ligand contact to ATP.

Belongs to the ATPase alpha/beta chains family. In terms of assembly, F-type ATPases have 2 components, CF(1) - the catalytic core - and CF(0) - the membrane proton channel. CF(1) has five subunits: alpha(3), beta(3), gamma(1), delta(1), epsilon(1). CF(0) has three main subunits: a(1), b(2) and c(9-12). The alpha and beta chains form an alternating ring which encloses part of the gamma chain. CF(1) is attached to CF(0) by a central stalk formed by the gamma and epsilon chains, while a peripheral stalk is formed by the delta and b chains. In this bacterium the a and b subunits are transcribed but do not seem to be translated, thus the ATP synthase consists of the alpha, beta, gamma, delta, epsilon and c subunits.

The protein resides in the cell membrane. The catalysed reaction is ATP + H2O + 4 H(+)(in) = ADP + phosphate + 5 H(+)(out). Functionally, produces ATP from ADP in the presence of a proton gradient across the membrane. The catalytic sites are hosted primarily by the beta subunits. This chain is ATP synthase subunit beta, found in Moorella thermoacetica (strain ATCC 39073 / JCM 9320).